The chain runs to 265 residues: Tryptophan synthase alpha chain (265 aa).

Residues Glu49 and Asp60 each act as proton acceptor in the active site.

Belongs to the TrpA family. As to quaternary structure, tetramer of two alpha and two beta chains.

The enzyme catalyses (1S,2R)-1-C-(indol-3-yl)glycerol 3-phosphate + L-serine = D-glyceraldehyde 3-phosphate + L-tryptophan + H2O. It participates in amino-acid biosynthesis; L-tryptophan biosynthesis; L-tryptophan from chorismate: step 5/5. Its function is as follows. The alpha subunit is responsible for the aldol cleavage of indoleglycerol phosphate to indole and glyceraldehyde 3-phosphate. This Polynucleobacter necessarius subsp. necessarius (strain STIR1) protein is Tryptophan synthase alpha chain.